The sequence spans 600 residues: MAPGANIHIPPAGPPEPGPLYSDFYQQQIERQRNNNYHSTSLRNMVATSVNRTALHPGGVQPGKGHTELEEELHEHAHIDYDRVAIIANPSVAALYEDALVYETGTAITSSGALTAYSGAKTGRSPSDKRIVKEESSEKEVWWGPVNKPMTPDVWRINRERAVDYLNTRNRIYVIDGFAGWDERYRISVRVVCARAYHALFMRNMLIRPSAEELKHFHPDYVIYNAGSFPANRFTEGMTSATSVAINFAEKEMVILGTEYAGEMKKGVFTILFYEMPVKHNVLTLHSSANEGQNGDVTVFFGLSGTGKTTLSADPKRALIGDDEHCWTDRGVFNIEGGCYAKCIGLSAEKEPDIFNAIRFGSVLENVVFDPISRVVDYDDSTLTENTRCAYPIEYIENAKVPCLSDSHPSNIILLTCDARGVLPPISKLTTEQTMFHFISGYTSKMAGTEDGVTEPQATFSSCFAQPFLALHPMRYARMLADKISQHKANAWLLNTGWVGAGATTGGKRCPLKYTRAILDAIHSGELAKAEYETYDVFNLHVPKSCPGVPDELLNPKNSWTATTSFSDEVNKLAKLFNENFQKYADQATKEVIAAGPVVQ.

302–309 (GLSGTGKT) lines the ATP pocket.

The protein belongs to the phosphoenolpyruvate carboxykinase (ATP) family.

It carries out the reaction oxaloacetate + ATP = phosphoenolpyruvate + ADP + CO2. It functions in the pathway carbohydrate biosynthesis; gluconeogenesis. The chain is Phosphoenolpyruvate carboxykinase (ATP) (acuF) from Emericella nidulans (strain FGSC A4 / ATCC 38163 / CBS 112.46 / NRRL 194 / M139) (Aspergillus nidulans).